We begin with the raw amino-acid sequence, 717 residues long: Glycine--tRNA ligase beta subunit (717 aa).

It belongs to the class-II aminoacyl-tRNA synthetase family. As to quaternary structure, tetramer of two alpha and two beta subunits.

It is found in the cytoplasm. It carries out the reaction tRNA(Gly) + glycine + ATP = glycyl-tRNA(Gly) + AMP + diphosphate. The polypeptide is Glycine--tRNA ligase beta subunit (Agrobacterium fabrum (strain C58 / ATCC 33970) (Agrobacterium tumefaciens (strain C58))).